A 658-amino-acid chain; its full sequence is Aminopeptidase P1 (658 aa).

2 residues coordinate a peptide: Arg69 and His436. 3 residues coordinate Mn(2+): Asp456, Asp467, and His530. A peptide is bound by residues His530, His539, and Glu563. Mn(2+) contacts are provided by Glu563 and Glu577.

Belongs to the peptidase M24B family. As to quaternary structure, homodimer. Interacts with N-1-naphthylphthalamic acid (NPA). Interacts with NBCL/BOP2/COCH around the plasma membrane and in the nucleus; this interaction disturbs its regulation of the nuclear transcription factor Y subunit (NF-YA1). The cofactor is Mn(2+). Requires Zn(2+) as cofactor. As to expression, expressed at similar levels in shoot apical meristems (SAM), root meristems (RM), root apical meristems (RAM), roots and leaves and, to a slightly lesser degree, in root nodules.

Its subcellular location is the nucleus. The protein resides in the cytoplasm. It localises to the cell membrane. It is found in the microsome membrane. It carries out the reaction Release of any N-terminal amino acid, including proline, that is linked to proline, even from a dipeptide or tripeptide.. In terms of biological role, catalyzes the removal of a penultimate prolyl residue from the N-termini of peptides, such as Arg-Pro-Pro. Aminopeptidase that binds to the auxin transport inhibitor N-1-naphthylphthalamic acid (NPA). May play a negative role in the regulation of PIN auxin transport proteins. Involved in the coordination of the symbiotic nodule developmental program; prevents the formation of root nodules by regulating the expression of the nuclear transcription factor Y subunit (NF-YA1), a key nodulin. This is Aminopeptidase P1 from Lotus japonicus (Lotus corniculatus var. japonicus).